The primary structure comprises 185 residues: NAD(P)H-dependent FMN reductase PA1204 (185 aa).

FMN is bound by residues 13-20 (SLRSGSYN) and 81-83 (YNY). NAD(+) is bound at residue 115 to 122 (SAGRFGTA).

This sequence belongs to the SsuE family. In terms of assembly, homodimer. FMN is required as a cofactor.

Its function is as follows. Has NAD(P)H-dependent FMN reductase activity. In Pseudomonas aeruginosa (strain ATCC 15692 / DSM 22644 / CIP 104116 / JCM 14847 / LMG 12228 / 1C / PRS 101 / PAO1), this protein is NAD(P)H-dependent FMN reductase PA1204.